The following is a 246-amino-acid chain: ATP synthase subunit a, chloroplastic (246 aa).

4 consecutive transmembrane segments (helical) span residues 35-55 (GQVF…ALVG), 94-114 (VPYI…GALI), 133-153 (INVT…AGLS), and 202-222 (VFAL…GLFA).

This sequence belongs to the ATPase A chain family. F-type ATPases have 2 components, CF(1) - the catalytic core - and CF(0) - the membrane proton channel. CF(1) has five subunits: alpha(3), beta(3), gamma(1), delta(1), epsilon(1). CF(0) has four main subunits: a, b, b' and c.

It localises to the plastid. It is found in the chloroplast thylakoid membrane. Key component of the proton channel; it plays a direct role in the translocation of protons across the membrane. The sequence is that of ATP synthase subunit a, chloroplastic from Rhodomonas salina (Cryptomonas salina).